The primary structure comprises 223 residues: Deoxyribose-phosphate aldolase (223 aa).

The Proton donor/acceptor role is filled by Asp-91. The Schiff-base intermediate with acetaldehyde role is filled by Lys-153. Lys-182 (proton donor/acceptor) is an active-site residue.

Belongs to the DeoC/FbaB aldolase family. DeoC type 1 subfamily.

The protein resides in the cytoplasm. It catalyses the reaction 2-deoxy-D-ribose 5-phosphate = D-glyceraldehyde 3-phosphate + acetaldehyde. The protein operates within carbohydrate degradation; 2-deoxy-D-ribose 1-phosphate degradation; D-glyceraldehyde 3-phosphate and acetaldehyde from 2-deoxy-alpha-D-ribose 1-phosphate: step 2/2. In terms of biological role, catalyzes a reversible aldol reaction between acetaldehyde and D-glyceraldehyde 3-phosphate to generate 2-deoxy-D-ribose 5-phosphate. In Streptococcus pyogenes serotype M12 (strain MGAS2096), this protein is Deoxyribose-phosphate aldolase.